The following is a 291-amino-acid chain: 3-hydroxy-5-phosphonooxypentane-2,4-dione thiolase (291 aa).

Lys-203 serves as the catalytic Schiff-base intermediate with substrate.

It belongs to the DeoC/FbaB aldolase family. Homodecamer.

The protein resides in the cytoplasm. It catalyses the reaction dihydroxyacetone phosphate + acetyl-CoA = 3-hydroxy-2,4-dioxopentyl phosphate + CoA. In terms of biological role, involved in the degradation of phospho-AI-2, thereby terminating induction of the lsr operon and closing the AI-2 signaling cycle. Catalyzes the transfer of an acetyl moiety from 3-hydroxy-5-phosphonooxypentane-2,4-dione to CoA to form glycerone phosphate and acetyl-CoA. The polypeptide is 3-hydroxy-5-phosphonooxypentane-2,4-dione thiolase (Escherichia coli O139:H28 (strain E24377A / ETEC)).